A 359-amino-acid chain; its full sequence is tRNA-specific 2-thiouridylase MnmA (359 aa).

ATP is bound by residues 9 to 16 and Met-35; that span reads GISGGVDS. The interval 95–97 is interaction with target base in tRNA; the sequence is NPD. The Nucleophile role is filled by Cys-100. Cys-100 and Cys-197 are joined by a disulfide. Gly-124 is a binding site for ATP. Residues 147–149 form an interaction with tRNA region; it reads KDQ. Catalysis depends on Cys-197, which acts as the Cysteine persulfide intermediate. Residues 309-310 are interaction with tRNA; sequence RY.

It belongs to the MnmA/TRMU family.

Its subcellular location is the cytoplasm. It carries out the reaction S-sulfanyl-L-cysteinyl-[protein] + uridine(34) in tRNA + AH2 + ATP = 2-thiouridine(34) in tRNA + L-cysteinyl-[protein] + A + AMP + diphosphate + H(+). In terms of biological role, catalyzes the 2-thiolation of uridine at the wobble position (U34) of tRNA, leading to the formation of s(2)U34. This is tRNA-specific 2-thiouridylase MnmA from Francisella tularensis subsp. tularensis (strain FSC 198).